Here is a 1319-residue protein sequence, read N- to C-terminus: Chitin-binding domain protein cbd-1 (1319 aa).

Positions 1 to 19 (MGPQLATVSLLLLTFFSNS) are cleaved as a signal peptide. 3 consecutive Chitin-binding type-2 domains span residues 28 to 83 (ATEC…ECRV), 96 to 141 (EFDC…TQDC), and 190 to 236 (DFDC…QSCD). 3 disulfide bridges follow: cysteine 61/cysteine 72, cysteine 128/cysteine 141, and cysteine 222/cysteine 235. The segment at 250 to 271 (YSTSTITTPQEDDSEYSSTTSA) is disordered. The 54-residue stretch at 304-357 (PFVCQEGQVNSFGMCSSRFNRCQNNSVRSKQCPVNTLFESSLVMCVFDLPQCQP) folds into the Chitin-binding type-2 4 domain. N-linked (GlcNAc...) asparagine glycosylation is present at asparagine 327. Cysteine 335 and cysteine 348 are joined by a disulfide. Residues 504–524 (KNRHSKKQLGPHEDPDGYDDE) form a disordered region. The segment covering 513–524 (GPHEDPDGYDDE) has biased composition (basic and acidic residues). Positions 566 to 614 (NKDCQQYTTPTFLTFGDCFDQFIFCSGNGINRMAACPIGETFDKTLRSC) constitute a Chitin-binding type-2 5 domain. Residues cysteine 601 and cysteine 614 are joined by a disulfide bond. The disordered stretch occupies residues 649–682 (VTTQSTWNDQPSTTQAPNSYESYTTQYSSNDVPS). Chitin-binding type-2 domains follow at residues 689–745 (GDRC…ECGS), 782–838 (GDRC…KCQT), and 883–942 (VDTC…ACDE). Cysteines 721 and 734 form a disulfide. The disordered stretch occupies residues 742–764 (ECGSQGSTSSPVITTPGQDQSSN). The span at 745-764 (SQGSTSSPVITTPGQDQSSN) shows a compositional bias: polar residues. 2 disulfides stabilise this stretch: cysteine 814–cysteine 827 and cysteine 916–cysteine 929. Over residues 984–995 (TGSTKYSTTDSG) the composition is skewed to polar residues. The disordered stretch occupies residues 984 to 1031 (TGSTKYSTTDSGEYTIPYGDETTSTRSYDRADNDSEDEEEDDVEHDQK). Asparagine 1016 carries N-linked (GlcNAc...) asparagine glycosylation. Residues 1017-1027 (DSEDEEEDDVE) are compositionally biased toward acidic residues. Chitin-binding type-2 domains follow at residues 1029–1081 (DQKC…GCGK), 1105–1163 (EGRC…ACTV), 1179–1237 (SAFC…GCEN), and 1242–1298 (NGEC…SCSG). Cystine bridges form between cysteine 1060–cysteine 1073, cysteine 1139–cysteine 1152, cysteine 1213–cysteine 1226, and cysteine 1274–cysteine 1287. Over residues 1297-1312 (SGQASDSNSSYGSSTY) the composition is skewed to low complexity. The disordered stretch occupies residues 1297-1319 (SGQASDSNSSYGSSTYNDDKSGY). Asparagine 1304 is a glycosylation site (N-linked (GlcNAc...) asparagine).

It is found in the secreted. It localises to the extracellular space. Its subcellular location is the extracellular matrix. Functionally, in unfertilized oocytes, maintains egg-1 and egg-2 at the plasma membrane together with chitin synthase chs-1 and kinase mbk-2. Essential for the formation of a continuous and cohesive chitin layer following fertilization. The chain is Chitin-binding domain protein cbd-1 from Caenorhabditis elegans.